Consider the following 516-residue polypeptide: Exodeoxyribonuclease 7 large subunit (516 aa).

This sequence belongs to the XseA family. Heterooligomer composed of large and small subunits.

Its subcellular location is the cytoplasm. The catalysed reaction is Exonucleolytic cleavage in either 5'- to 3'- or 3'- to 5'-direction to yield nucleoside 5'-phosphates.. Its function is as follows. Bidirectionally degrades single-stranded DNA into large acid-insoluble oligonucleotides, which are then degraded further into small acid-soluble oligonucleotides. This Chlamydia trachomatis serovar L2 (strain ATCC VR-902B / DSM 19102 / 434/Bu) protein is Exodeoxyribonuclease 7 large subunit.